A 625-amino-acid chain; its full sequence is Interferon-induced GTP-binding protein Mx2 (625 aa).

Positions 29–302 constitute a Dynamin-type G domain; that stretch reads DLALPAIAVI…LVFHIGRCLP (274 aa). A G1 motif region spans residues 39–46; that stretch reads GDQSSGKS. A GTP-binding site is contributed by 39–46; the sequence is GDQSSGKS. The segment at 64-66 is G2 motif; sequence VTR. The tract at residues 140–143 is G3 motif; sequence DLPG. GTP is bound by residues 140–144 and 209–212; these read DLPGI and TKPD. The segment at 209–212 is G4 motif; it reads TKPD. Residues 241-244 are G5 motif; sequence RCRG. The GED domain occupies 539–625; the sequence is REELTCHLKS…TEALKYLAKF (87 aa).

It belongs to the TRAFAC class dynamin-like GTPase superfamily. Dynamin/Fzo/YdjA family.

It localises to the cytoplasm. The chain is Interferon-induced GTP-binding protein Mx2 (mx2) from Ictalurus punctatus (Channel catfish).